The chain runs to 329 residues: Phosphate acyltransferase (329 aa).

Belongs to the PlsX family. In terms of assembly, homodimer. Probably interacts with PlsY.

Its subcellular location is the cytoplasm. The catalysed reaction is a fatty acyl-[ACP] + phosphate = an acyl phosphate + holo-[ACP]. It functions in the pathway lipid metabolism; phospholipid metabolism. Functionally, catalyzes the reversible formation of acyl-phosphate (acyl-PO(4)) from acyl-[acyl-carrier-protein] (acyl-ACP). This enzyme utilizes acyl-ACP as fatty acyl donor, but not acyl-CoA. The polypeptide is Phosphate acyltransferase (Campylobacter concisus (strain 13826)).